A 399-amino-acid chain; its full sequence is Phosphoglycerate kinase (399 aa).

Residues 24–26, R41, 64–67, R123, and R160 contribute to the substrate site; these read DLN and HLGR. Residues K210, G298, E329, and 355-358 each bind ATP; that span reads GGDS.

The protein belongs to the phosphoglycerate kinase family. In terms of assembly, monomer.

It is found in the cytoplasm. It catalyses the reaction (2R)-3-phosphoglycerate + ATP = (2R)-3-phospho-glyceroyl phosphate + ADP. It participates in carbohydrate degradation; glycolysis; pyruvate from D-glyceraldehyde 3-phosphate: step 2/5. The protein is Phosphoglycerate kinase of Salinispora tropica (strain ATCC BAA-916 / DSM 44818 / JCM 13857 / NBRC 105044 / CNB-440).